A 178-amino-acid chain; its full sequence is Large ribosomal subunit protein bL25 (178 aa).

The protein belongs to the bacterial ribosomal protein bL25 family. CTC subfamily. In terms of assembly, part of the 50S ribosomal subunit; part of the 5S rRNA/L5/L18/L25 subcomplex. Contacts the 5S rRNA. Binds to the 5S rRNA independently of L5 and L18.

In terms of biological role, this is one of the proteins that binds to the 5S RNA in the ribosome where it forms part of the central protuberance. The protein is Large ribosomal subunit protein bL25 of Helicobacter pylori (strain HPAG1).